Consider the following 284-residue polypeptide: P2R1A-PPP2R2A-interacting phosphatase regulator 1 (284 aa).

Disordered regions lie at residues 1–32 (MAQE…SNSA), 112–198 (EESL…PIKR), and 235–284 (AHTL…LPID). 2 stretches are compositionally biased toward low complexity: residues 152–164 (SPSL…SSGL) and 172–184 (PTRR…SQSP). Residues 258–269 (STGSPVSLSDSR) show a composition bias toward polar residues.

Belongs to the FAM122 family.

The protein resides in the nucleus. Its subcellular location is the cytoplasm. Functionally, acts as an inhibitor of serine/threonine-protein phosphatase 2A (PP2A) activity. Potentiates ubiquitin-mediated proteasomal degradation of serine/threonine-protein phosphatase 2A catalytic subunit alpha (PPP2CA). Inhibits PP2A-mediated dephosphorylation of WEE1, promoting ubiquitin-mediated proteolysis of WEE1, thereby releasing G2/M checkpoint. The sequence is that of P2R1A-PPP2R2A-interacting phosphatase regulator 1 from Gallus gallus (Chicken).